A 351-amino-acid polypeptide reads, in one-letter code: Transcription elongation factor A N-terminal and central domain-containing protein (351 aa).

In terms of domain architecture, TFIIS N-terminal spans 5 to 82; that stretch reads NQIAARASLI…SKWKAVYKQT (78 aa). 2 disordered regions span residues 86-119 and 144-169; these read ARNS…GICS and LKPK…LLDP. Residues 103–119 show a composition bias toward polar residues; it reads SGPSHDPSQNETLGICS. Positions 145-165 are enriched in basic and acidic residues; sequence KPKEEHFGDGDPESTGKRSSE. Residues 173–289 enclose the TFIIS central domain; that stretch reads MRTKCIELLY…EHYLPQVIDG (117 aa).

This chain is Transcription elongation factor A N-terminal and central domain-containing protein (TCEANC), found in Homo sapiens (Human).